The chain runs to 571 residues: MKMSKMFMPTLKEIPADAEITSHQLMVRSGMIKKMTSGVYNQLPMGLRVFKKIEQIIREELNKKDCQEILCAALLPSELWKESGRWTAMGEEMFRLKDRTEREYCLGPTHEEAFTDIIRQEITSYKQLPLNLYQIQVKYRDERRPRFGVMRTKTFTMKDAYSFDVDDKGLDKSYQDMFDAYVSIFDRCGLENSPVQADSGAIGGSTSAEFMVKSEVGEDEVVFCSGCDYAANVERAESCNLASQKEEMKELEEVHTPGAATIKELEEFLKTSPDKFAKTLVYEADGKTVVVVVRGDREVNEIKVSNAIGSVIEFALATDDVVRKVTNAEVGFAGPIGINADYVFIDKEIVEQRNIVVGANKTEYHIKNANYGRDFEGIVGDFRNVQEGDKCIVCGKPLEIARGVEVGHIFKLGTKYSESMNANFIDKDGKSKPIVMGCYGIGVERTAAAIIEQHNDEKGIIWPLSVAPYHVVIVPANMKNEEQISIAENIYNDLQAMGVEVLLDDRDERIGVKFNDSELIGIPMRITVGKNINEGKVEFKLRHKEDKEIIDIEEINEKVKAEFIRNNVRLG.

This sequence belongs to the class-II aminoacyl-tRNA synthetase family. ProS type 1 subfamily. Homodimer.

It is found in the cytoplasm. The catalysed reaction is tRNA(Pro) + L-proline + ATP = L-prolyl-tRNA(Pro) + AMP + diphosphate. Functionally, catalyzes the attachment of proline to tRNA(Pro) in a two-step reaction: proline is first activated by ATP to form Pro-AMP and then transferred to the acceptor end of tRNA(Pro). As ProRS can inadvertently accommodate and process non-cognate amino acids such as alanine and cysteine, to avoid such errors it has two additional distinct editing activities against alanine. One activity is designated as 'pretransfer' editing and involves the tRNA(Pro)-independent hydrolysis of activated Ala-AMP. The other activity is designated 'posttransfer' editing and involves deacylation of mischarged Ala-tRNA(Pro). The misacylated Cys-tRNA(Pro) is not edited by ProRS. This chain is Proline--tRNA ligase 1, found in Clostridioides difficile (strain 630) (Peptoclostridium difficile).